The following is a 283-amino-acid chain: Lipoyl synthase (283 aa).

[4Fe-4S] cluster-binding residues include Cys35, Cys40, Cys46, Cys61, Cys65, Cys68, and Ser273. In terms of domain architecture, Radical SAM core spans 47-262 (FRERQATFLI…RAAALATGFA (216 aa)).

The protein belongs to the radical SAM superfamily. Lipoyl synthase family. [4Fe-4S] cluster serves as cofactor.

The protein localises to the cytoplasm. It carries out the reaction [[Fe-S] cluster scaffold protein carrying a second [4Fe-4S](2+) cluster] + N(6)-octanoyl-L-lysyl-[protein] + 2 oxidized [2Fe-2S]-[ferredoxin] + 2 S-adenosyl-L-methionine + 4 H(+) = [[Fe-S] cluster scaffold protein] + N(6)-[(R)-dihydrolipoyl]-L-lysyl-[protein] + 4 Fe(3+) + 2 hydrogen sulfide + 2 5'-deoxyadenosine + 2 L-methionine + 2 reduced [2Fe-2S]-[ferredoxin]. It functions in the pathway protein modification; protein lipoylation via endogenous pathway; protein N(6)-(lipoyl)lysine from octanoyl-[acyl-carrier-protein]: step 2/2. In terms of biological role, catalyzes the radical-mediated insertion of two sulfur atoms into the C-6 and C-8 positions of the octanoyl moiety bound to the lipoyl domains of lipoate-dependent enzymes, thereby converting the octanoylated domains into lipoylated derivatives. The chain is Lipoyl synthase from Geobacter metallireducens (strain ATCC 53774 / DSM 7210 / GS-15).